A 339-amino-acid polypeptide reads, in one-letter code: Nicotinate-nucleotide--dimethylbenzimidazole phosphoribosyltransferase (339 aa).

The Proton acceptor role is filled by glutamate 306.

This sequence belongs to the CobT family.

It carries out the reaction 5,6-dimethylbenzimidazole + nicotinate beta-D-ribonucleotide = alpha-ribazole 5'-phosphate + nicotinate + H(+). It functions in the pathway nucleoside biosynthesis; alpha-ribazole biosynthesis; alpha-ribazole from 5,6-dimethylbenzimidazole: step 1/2. Its function is as follows. Catalyzes the synthesis of alpha-ribazole-5'-phosphate from nicotinate mononucleotide (NAMN) and 5,6-dimethylbenzimidazole (DMB). This Brucella abortus (strain S19) protein is Nicotinate-nucleotide--dimethylbenzimidazole phosphoribosyltransferase.